Consider the following 147-residue polypeptide: D-aminoacyl-tRNA deacylase (147 aa).

Positions 137-138 match the Gly-cisPro motif, important for rejection of L-amino acids motif; the sequence is GP.

It belongs to the DTD family. Homodimer.

It is found in the cytoplasm. It catalyses the reaction glycyl-tRNA(Ala) + H2O = tRNA(Ala) + glycine + H(+). The enzyme catalyses a D-aminoacyl-tRNA + H2O = a tRNA + a D-alpha-amino acid + H(+). Functionally, an aminoacyl-tRNA editing enzyme that deacylates mischarged D-aminoacyl-tRNAs. Also deacylates mischarged glycyl-tRNA(Ala), protecting cells against glycine mischarging by AlaRS. Acts via tRNA-based rather than protein-based catalysis; rejects L-amino acids rather than detecting D-amino acids in the active site. By recycling D-aminoacyl-tRNA to D-amino acids and free tRNA molecules, this enzyme counteracts the toxicity associated with the formation of D-aminoacyl-tRNA entities in vivo and helps enforce protein L-homochirality. Upon expression in B.subtilis strain 168 confers resistance to D-Tyr and D-Asp, suggesting it acts on both of these amino acids. This is D-aminoacyl-tRNA deacylase from Bacillus amyloliquefaciens (Bacillus velezensis).